The chain runs to 306 residues: Pantothenate kinase (306 aa).

Gly-90 to Ser-97 contacts ATP.

It belongs to the prokaryotic pantothenate kinase family.

It is found in the cytoplasm. The enzyme catalyses (R)-pantothenate + ATP = (R)-4'-phosphopantothenate + ADP + H(+). It functions in the pathway cofactor biosynthesis; coenzyme A biosynthesis; CoA from (R)-pantothenate: step 1/5. This Ligilactobacillus salivarius (strain UCC118) (Lactobacillus salivarius) protein is Pantothenate kinase.